The following is a 471-amino-acid chain: Membrane-associated sulfotransferase kil1 (471 aa).

Over 1-12 (MSTTSMILTKKN) the chain is Cytoplasmic. Residues 13-33 (IIILSIIIITIIAYQFYITSP) form a helical; Signal-anchor for type II membrane protein membrane-spanning segment. At 34–471 (QSFPSSNTIT…LLNRDFKWQN (438 aa)) the chain is on the lumenal side. Asparagine 47 carries an N-linked (GlcNAc...) asparagine glycan. Composition is skewed to low complexity over residues 89–105 (NQNE…NNNK) and 112–127 (NNNN…NNNN). A disordered region spans residues 89–127 (NQNENQNQINNEYNNNKLNDEQENNNNNNYNNNNNNNNN). 3'-phosphoadenylyl sulfate is bound by residues 167–172 (KSGTTF), arginine 252, and serine 260. 2 N-linked (GlcNAc...) asparagine glycosylation sites follow: asparagine 324 and asparagine 344. Tyrosine 348 contacts 3'-phosphoadenylyl sulfate.

Belongs to the sulfotransferase 1 family.

The protein resides in the membrane. Its function is as follows. Sulfotransferase involved in intracellular killing of bacteria. The protein is Membrane-associated sulfotransferase kil1 (kil1) of Dictyostelium discoideum (Social amoeba).